We begin with the raw amino-acid sequence, 291 residues long: Transcription initiation factor IIE subunit beta (291 aa).

Methionine 1 is modified (N-acetylmethionine). Residues 1 to 13 (MDPSLLRERELFK) show a composition bias toward basic and acidic residues. The interval 1–63 (MDPSLLRERE…NSDHSNGSFN (63 aa)) is disordered. Over residues 50 to 62 (GSKQNSDHSNGSF) the composition is skewed to polar residues. Position 61 is a phosphoserine (serine 61). Residues 66 to 146 (ALSGSSGYKF…YAFKPKYNVR (81 aa)) constitute a DNA-binding region (TFIIE beta). At lysine 74 the chain carries N6-acetyllysine. The interval 243–272 (SSMQESGPKKVAPIQRRKKPASQKKRRFKT) is disordered. The segment covering 257–271 (QRRKKPASQKKRRFK) has biased composition (basic residues).

Belongs to the TFIIE beta subunit family. Tetramer of two alpha and two beta chains. Interacts with FACT subunit SUPT16H. Interacts with ATF7IP. Interacts with SND1. Part of TBP-based Pol II pre-initiation complex (PIC), in which Pol II core assembles with general transcription factors and other specific initiation factors including GTF2E1, GTF2E2, GTF2F1, GTF2F2, TCEA1, ERCC2, ERCC3, GTF2H2, GTF2H3, GTF2H4, GTF2H5, GTF2A1, GTF2A2, GTF2B and TBP; this large multi-subunit PIC complex mediates DNA unwinding and targets Pol II core to the transcription start site where the first phosphodiester bond forms.

It localises to the nucleus. In terms of biological role, recruits TFIIH to the initiation complex and stimulates the RNA polymerase II C-terminal domain kinase and DNA-dependent ATPase activities of TFIIH. Both TFIIH and TFIIE are required for promoter clearance by RNA polymerase. The protein is Transcription initiation factor IIE subunit beta (GTF2E2) of Homo sapiens (Human).